Consider the following 216-residue polypeptide: 3-keto-L-gulonate-6-phosphate decarboxylase UlaD (216 aa).

Aspartate 11 is a substrate binding site. Mg(2+) is bound by residues glutamate 33 and aspartate 62. Arginine 192 provides a ligand contact to substrate.

It belongs to the HPS/KGPDC family. KGPDC subfamily. As to quaternary structure, homodimer. The cofactor is Mg(2+).

It catalyses the reaction 3-dehydro-L-gulonate 6-phosphate + H(+) = L-xylulose 5-phosphate + CO2. Its pathway is cofactor degradation; L-ascorbate degradation; D-xylulose 5-phosphate from L-ascorbate: step 2/4. Its function is as follows. Catalyzes the decarboxylation of 3-keto-L-gulonate-6-P into L-xylulose-5-P. Is involved in the anaerobic L-ascorbate utilization. The polypeptide is 3-keto-L-gulonate-6-phosphate decarboxylase UlaD (Escherichia coli O139:H28 (strain E24377A / ETEC)).